We begin with the raw amino-acid sequence, 215 residues long: Sodium channel regulatory subunit beta-2 (215 aa).

The signal sequence occupies residues 1–29 (MHRDAWLPRPAFSLTGLSLFFSLVPPGRS). At 30-157 (MEVTVPATLN…XEEPPERDST (128 aa)) the chain is on the extracellular side. One can recognise an Ig-like C2-type domain in the interval 32–154 (VTVPATLNVL…QVLXEEPPER (123 aa)). N-linked (GlcNAc...) asparagine glycosylation is found at asparagine 42, asparagine 66, and asparagine 74. Disulfide bonds link cysteine 50–cysteine 127 and cysteine 72–cysteine 75. Residues 158–179 (VAVIVGASVGGFLAVVILVLMV) traverse the membrane as a helical segment. Over 180-215 (VKCVRRKKEQKLSTDDLKTEEEGKTDGEGNPDDGAK) the chain is Cytoplasmic. Positions 187–215 (KEQKLSTDDLKTEEEGKTDGEGNPDDGAK) are disordered. The span at 189-215 (QKLSTDDLKTEEEGKTDGEGNPDDGAK) shows a compositional bias: basic and acidic residues. A Phosphoserine modification is found at serine 192. Threonine 204 is subject to Phosphothreonine.

This sequence belongs to the sodium channel auxiliary subunit SCN2B (TC 8.A.17) family. A voltage-gated sodium (Nav) channel consists of an ion-conducting pore-forming alpha subunit functional on its own that is regulated by one or more beta subunits. The beta subunit SCN2B is disulfide-linked to the pore-forming alpha subunit. Interacts with SCN1A; regulatory subunit of SCN1A/Nav1.1. Interacts with SCN2A; regulatory subunit of SCN2A/Nav1.2. Interacts with SCN3A; regulatory subunit of SCN3A/Nav1.3. Interacts with SCN5A; regulatory subunit of SCN5A/Nav1.5. Interacts with SCN8A; regulatory subunit of SCN8A/Nav1.6. Interacts with SCN9A; regulatory subunit of SCN9A/Nav1.7. Interacts with SCN10A; regulatory subunit of SCN10A/Nav1.8. Interacts with TNR; may play a crucial role in clustering and regulation of activity of SCN2B-containing Nav channels at nodes of Ranvier.

It localises to the cell membrane. Its subcellular location is the cell projection. It is found in the axon. In terms of biological role, regulatory subunit of multiple voltage-gated sodium (Nav) channels, that directly mediate the depolarization of excitable membranes. Navs, also called VGSCs (voltage-gated sodium channels) or VDSCs (voltage-dependent sodium channels), operate by switching between closed and open conformations depending on the voltage difference across the membrane. In the open conformation they allow Na(+) ions to selectively pass through the pore, along their electrochemical gradient. The influx of Na+ ions provokes membrane depolarization, initiating the propagation of electrical signals throughout cells and tissues. The accessory beta subunits participate in localization and functional modulation of the Nav channels. Modulates the activity of SCN1A/Nav1.1, SCN2A/Nav1.2, SCN2A/Nav1.3, SCN5A/Nav1.5, SCN8A/Nav1.6, SCN9A/Nav1.7 and SCN10A/Nav1.8. This Canis lupus familiaris (Dog) protein is Sodium channel regulatory subunit beta-2.